A 1117-amino-acid polypeptide reads, in one-letter code: Mitochondrial protein cyt-4 (1117 aa).

Positions 561 to 916 constitute an RNB domain; sequence RQDFYTSTVY…LVHWQIQAAL (356 aa). The disordered stretch occupies residues 705–730; it reads VVLEVGTPPSAEDEAPTRKMTKPDEL. The segment covering 719 to 730 has biased composition (basic and acidic residues); the sequence is APTRKMTKPDEL.

This sequence belongs to the RNR ribonuclease family. In terms of assembly, homodimer.

Its subcellular location is the mitochondrion. Its function is as follows. Required for RNA 5'- and 3'-end processing and splicing. May act on the RNA processing enzymes directly, or it may act on other regulatory molecules, which influence the activity or synthesis of these enzymes. The polypeptide is Mitochondrial protein cyt-4 (cyt-4) (Neurospora crassa (strain ATCC 24698 / 74-OR23-1A / CBS 708.71 / DSM 1257 / FGSC 987)).